A 118-amino-acid polypeptide reads, in one-letter code: Large ribosomal subunit protein uL18 (118 aa).

It belongs to the universal ribosomal protein uL18 family. Part of the 50S ribosomal subunit; part of the 5S rRNA/L5/L18/L25 subcomplex. Contacts the 5S and 23S rRNAs.

Its function is as follows. This is one of the proteins that bind and probably mediate the attachment of the 5S RNA into the large ribosomal subunit, where it forms part of the central protuberance. The chain is Large ribosomal subunit protein uL18 from Sulfurovum sp. (strain NBC37-1).